Consider the following 312-residue polypeptide: Small ribosomal subunit protein uS2 (312 aa).

This sequence belongs to the universal ribosomal protein uS2 family. Component of the small ribosomal subunit. Mature ribosomes consist of a small (40S) and a large (60S) subunit. The 40S subunit contains about 33 different proteins and 1 molecule of RNA (18S). The 60S subunit contains about 49 different proteins and 3 molecules of RNA (25S, 5.8S and 5S). Interacts with ribosomal protein S21.

It localises to the cytoplasm. Functionally, required for the assembly and/or stability of the 40S ribosomal subunit. Required for the processing of the 20S rRNA-precursor to mature 18S rRNA in a late step of the maturation of 40S ribosomal subunits. The chain is Small ribosomal subunit protein uS2 from Vitis vinifera (Grape).